Reading from the N-terminus, the 1222-residue chain is Serine/threonine-protein kinase WNK4 (1222 aa).

The span at 1-17 (MLAPRNTETGVPMSQTE) shows a compositional bias: polar residues. The interval 1–165 (MLAPRNTETG…DTETQAVATS (165 aa)) is disordered. Over residues 90-101 (AGPTRSPPSSSK) the composition is skewed to low complexity. Serine 95 carries the post-translational modification Phosphoserine. Over residues 135-152 (EPPRVPDAAARERRREQE) the composition is skewed to basic and acidic residues. Glycyl lysine isopeptide (Lys-Gly) (interchain with G-Cter in ubiquitin) cross-links involve residues lysine 154 and lysine 172. Residues 171-429 (LKFDIEIGRG…IQDLLAHAFF (259 aa)) form the Protein kinase domain. Serine 181 serves as a coordination point for ATP. Glycyl lysine isopeptide (Lys-Gly) (interchain with G-Cter in ubiquitin) cross-links involve residues lysine 183, lysine 223, and lysine 238. ATP is bound by residues 251 to 254 (TELM) and lysine 301. Aspartate 318 acts as the Proton acceptor in catalysis. Lysine 325 is covalently cross-linked (Glycyl lysine isopeptide (Lys-Gly) (interchain with G-Cter in ubiquitin)). Phosphoserine; by autocatalysis occurs at positions 328 and 332. Residues lysine 384, lysine 390, lysine 447, and lysine 451 each participate in a glycyl lysine isopeptide (Lys-Gly) (interchain with G-Cter in ubiquitin) cross-link. Residues 525-562 (RELEVLPPDSGPPPATVSLAPGPPSAFPPEPEEPEADQ) are disordered. The span at 533-553 (DSGPPPATVSLAPGPPSAFPP) shows a compositional bias: pro residues. The interval 554-564 (EPEEPEADQHQ) is interaction with KLHL3. The residue at position 572 (serine 572) is a Phosphoserine. Disordered regions lie at residues 626–659 (RSGPGSDFSPGDSYASDAASGLSDMGEGGQMRKN), 747–809 (DAGP…GAPF), 877–896 (SYPQDPLSPTSLPVCPSPPS), and 927–976 (SPGL…AQPL). 4 stretches are compositionally biased toward low complexity: residues 627-638 (SGPGSDFSPGDS), 757-769 (ALSPQEEPAALPA), 793-807 (STSPSSPGTPLSPGA), and 877-890 (SYPQDPLSPTSLPV). Pro residues predominate over residues 935 to 944 (PPAPPGPLPS). Positions 953 to 963 (DQESLSAQTAE) are enriched in polar residues. A Glycyl lysine isopeptide (Lys-Gly) (interchain with G-Cter in ubiquitin) cross-link involves residue lysine 990. Residues 996-999 (RFQV) carry the RFXV motif motif. Residues 1000-1087 (TSSKEPAEPP…SSPILSHPSP (88 aa)) are disordered. Serine 1014 is subject to Phosphoserine. Positions 1014 to 1032 (SPTLSRSLKLPSPPLTSES) are enriched in low complexity. The span at 1044–1056 (ETREALAESDRAA) shows a compositional bias: basic and acidic residues. Residues lysine 1123, lysine 1136, and lysine 1137 each participate in a glycyl lysine isopeptide (Lys-Gly) (interchain with G-Cter in ubiquitin) cross-link. The tract at residues 1166-1222 (RRLSKGSFPTSRRNSLQRSDLPGPGIMRRNSLSGSSTGSQEQRASKGVTFAGDIGRM) is disordered. 2 stretches are compositionally biased toward polar residues: residues 1172–1183 (SFPTSRRNSLQR) and 1195–1207 (NSLSGSSTGSQEQ). Position 1196 is a phosphoserine (serine 1196).

The protein belongs to the protein kinase superfamily. Ser/Thr protein kinase family. WNK subfamily. Interacts with the C-terminal region of KCNJ1. Interacts with WNK1 and WNK3. Interacts with KLHL3. It depends on Mg(2+) as a cofactor. In terms of processing, autophosphorylated at Ser-328 and Ser-332, promoting its activation. Phosphorylated by WNK1 and WNK3. Phosphorylated at Ser-572 in a MAP3K15/ASK3-dependent process in response to osmotic stress or hypotonic low-chloride stimulation. Ubiquitinated by the BCR(KLHL3) complex, leading to its degradation. Also ubiquitinated by the BCR(KLHL2) complex. In terms of tissue distribution, locates to the distal convoluted tubule, the medullary collecting duct and the cortical collecting duct of the kidney. Expressed in pancreatic duct.

The protein resides in the cell junction. The protein localises to the tight junction. It catalyses the reaction L-seryl-[protein] + ATP = O-phospho-L-seryl-[protein] + ADP + H(+). The enzyme catalyses L-threonyl-[protein] + ATP = O-phospho-L-threonyl-[protein] + ADP + H(+). Activation requires autophosphorylation of Ser-328 and Ser-332. Autophosphorylation and subsequent activation is inhibited by increases in intracellular ionic strength: Cl(-) potently inhibits WNK4 kinase activity via direct binding. Also inhibited by K(+) ions. Serine/threonine-protein kinase component of the WNK4-SPAK/OSR1 kinase cascade, which acts as a key regulator of ion transport in the distal nephron and blood pressure. The WNK4-SPAK/OSR1 kinase cascade is composed of WNK4, which mediates phosphorylation and activation of downstream kinases OXSR1/OSR1 and STK39/SPAK. Following activation, OXSR1/OSR1 and STK39/SPAK catalyze phosphorylation of ion cotransporters, such as SLC12A1/NKCC2, SLC12A2/NKCC1, SLC12A3/NCC, SLC12A5/KCC2 or SLC12A6/KCC3, regulating their activity. Acts as a molecular switch that regulates the balance between renal salt reabsorption and K(+) secretion by modulating the activities of renal transporters and channels, including the Na-Cl cotransporter SLC12A3/NCC and the K(+) channel, KCNJ1/ROMK. Regulates NaCl reabsorption in the distal nephron by activating the thiazide-sensitive Na-Cl cotransporter SLC12A3/NCC in distal convoluted tubule cells of kidney: activates SLC12A3/NCC in a OXSR1/OSR1- and STK39/SPAK-dependent process. Also acts as a scaffold protein independently of its protein kinase activity: negatively regulates cell membrane localization of various transporters and channels (CFTR, KCNJ1/ROMK, SLC4A4, SLC26A9 and TRPV4) by clathrin-dependent endocytosis. Also inhibits the activity of the epithelial Na(+) channel (ENaC) SCNN1A, SCNN1B, SCNN1D in a inase-independent mechanism. May also phosphorylate NEDD4L. The protein is Serine/threonine-protein kinase WNK4 of Mus musculus (Mouse).